The primary structure comprises 284 residues: Type II methyltransferase M1.LlaDCHI (284 aa).

S-adenosyl-L-methionine-binding residues include tryptophan 17, lysine 21, aspartate 62, and aspartate 194.

It belongs to the N(4)/N(6)-methyltransferase family.

The catalysed reaction is a 2'-deoxyadenosine in DNA + S-adenosyl-L-methionine = an N(6)-methyl-2'-deoxyadenosine in DNA + S-adenosyl-L-homocysteine + H(+). In terms of biological role, an alpha subtype methylase, recognizes the double-stranded sequence 5'-GATC-3', methylates A-2 on both strands, and protects the DNA from cleavage by the LlaDCHI endonuclease. The protein is Type II methyltransferase M1.LlaDCHI of Lactococcus lactis subsp. cremoris (Streptococcus cremoris).